Consider the following 257-residue polypeptide: DNA-binding and peroxide stress resistance protein YaaA (257 aa).

Residues 35 to 66 carry the Helix-hairpin-helix motif; sequence IGIARKLSAPQIGKLMSISDKLADLNATRFHD.

This sequence belongs to the UPF0246 family.

It is found in the cytoplasm. Its function is as follows. Protects bacteria from neutrophil-related defense upon infection of mammals. Binds DNA. The sequence is that of DNA-binding and peroxide stress resistance protein YaaA from Klebsiella pneumoniae subsp. pneumoniae (strain HS11286).